The chain runs to 1083 residues: Regulator of the glycerol channel 1 (1083 aa).

Disordered regions lie at residues 1-46 and 69-89; these read MSDY…GSSD and LKNEPASGNTQMNGPDGKENK. A compositionally biased stretch (polar residues) spans 13–31; that stretch reads GGISKQPATPGSTRSSSRN. Residues Ser136, Ser249, Ser252, Ser481, and Ser537 each carry the phosphoserine modification. The 112-residue stretch at 495-606 folds into the PH domain; the sequence is CIRVGYLLKK…DCSLKDSTDS (112 aa). A disordered region spans residues 534–582; it reads DSKSPRSKNKPVVEQSDISRVNKDGTNAGSHPSSKGTQDPKLTKRRKGL. Over residues 549-570 the composition is skewed to polar residues; that stretch reads SDISRVNKDGTNAGSHPSSKGT. A phosphoserine mark is found at Ser652, Ser765, and Ser813. A phosphothreonine mark is found at Thr817 and Thr857. A phosphoserine mark is found at Ser866, Ser879, Ser918, Ser966, Ser969, and Ser975. Positions 979–1083 are disordered; the sequence is EENRTQNCSG…TVPATSASSK (105 aa). Composition is skewed to polar residues over residues 983–992, 1043–1061, and 1071–1083; these read TQNCSGSRKS, LKKTYSAENVPLTSTVSND, and STNTVPATSASSK. 3 positions are modified to phosphoserine: Ser1059, Ser1081, and Ser1082.

It belongs to the RGC1 family.

The protein localises to the cytoplasm. Functionally, positive regulator of FPS1 glycerol channel required for the glycerol efflux. This is Regulator of the glycerol channel 1 (RGC1) from Saccharomyces cerevisiae (strain ATCC 204508 / S288c) (Baker's yeast).